The following is a 452-amino-acid chain: Prephenate dehydrogenase [NADP(+)] (452 aa).

14 to 43 (KVIGIIGLGDMGLLYANKFTDAGWGVICCD) provides a ligand contact to NADP(+). The Prephenate/arogenate dehydrogenase domain occupies 14-297 (KVIGIIGLGD…GKHTGLLLLD (284 aa)).

This sequence belongs to the prephenate/arogenate dehydrogenase family.

It carries out the reaction prephenate + NADP(+) = 3-(4-hydroxyphenyl)pyruvate + CO2 + NADPH. The protein operates within amino-acid biosynthesis; L-tyrosine biosynthesis; (4-hydroxyphenyl)pyruvate from prephenate (NADP(+) route): step 1/1. The chain is Prephenate dehydrogenase [NADP(+)] (TYR1) from Saccharomyces cerevisiae (strain ATCC 204508 / S288c) (Baker's yeast).